A 399-amino-acid polypeptide reads, in one-letter code: S-adenosylmethionine synthase (399 aa).

Position 15 (H15) interacts with ATP. Mg(2+) is bound at residue D17. E43 is a K(+) binding site. L-methionine-binding residues include E56 and Q99. A flexible loop region spans residues 99 to 109 (QSPDIAGGVDH). Residues 175 to 177 (DAK), 242 to 243 (RF), D251, 257 to 258 (RK), A274, and K278 contribute to the ATP site. D251 contacts L-methionine. K282 is a binding site for L-methionine.

This sequence belongs to the AdoMet synthase family. Homotetramer; dimer of dimers. It depends on Mg(2+) as a cofactor. Requires K(+) as cofactor.

The protein resides in the cytoplasm. The enzyme catalyses L-methionine + ATP + H2O = S-adenosyl-L-methionine + phosphate + diphosphate. The protein operates within amino-acid biosynthesis; S-adenosyl-L-methionine biosynthesis; S-adenosyl-L-methionine from L-methionine: step 1/1. Functionally, catalyzes the formation of S-adenosylmethionine (AdoMet) from methionine and ATP. The overall synthetic reaction is composed of two sequential steps, AdoMet formation and the subsequent tripolyphosphate hydrolysis which occurs prior to release of AdoMet from the enzyme. The protein is S-adenosylmethionine synthase of Lactobacillus helveticus (strain DPC 4571).